The chain runs to 318 residues: Formimidoylglutamase (318 aa).

6 residues coordinate Mn(2+): histidine 124, aspartate 153, histidine 155, aspartate 157, cysteine 241, and aspartate 243.

It belongs to the arginase family. Mn(2+) is required as a cofactor.

The enzyme catalyses N-formimidoyl-L-glutamate + H2O = formamide + L-glutamate. The protein operates within amino-acid degradation; L-histidine degradation into L-glutamate; L-glutamate from N-formimidoyl-L-glutamate (hydrolase route): step 1/1. Catalyzes the conversion of N-formimidoyl-L-glutamate to L-glutamate and formamide. This is Formimidoylglutamase from Fusobacterium nucleatum subsp. nucleatum (strain ATCC 25586 / DSM 15643 / BCRC 10681 / CIP 101130 / JCM 8532 / KCTC 2640 / LMG 13131 / VPI 4355).